The sequence spans 100 residues: Large ribosomal subunit protein uL23 (100 aa).

Belongs to the universal ribosomal protein uL23 family. In terms of assembly, part of the 50S ribosomal subunit. Contacts protein L29, and trigger factor when it is bound to the ribosome.

In terms of biological role, one of the early assembly proteins it binds 23S rRNA. One of the proteins that surrounds the polypeptide exit tunnel on the outside of the ribosome. Forms the main docking site for trigger factor binding to the ribosome. The protein is Large ribosomal subunit protein uL23 of Thermotoga neapolitana (strain ATCC 49049 / DSM 4359 / NBRC 107923 / NS-E).